We begin with the raw amino-acid sequence, 800 residues long: Small ribosomal subunit protein uS3c (800 aa).

Residues 1-118 (MGQKVHPSGF…LQVKKDILVK (118 aa)) form an S3-like 1st part region. The tract at residues 119-664 (LQKTRQYLTN…FLDCKFEELE (546 aa)) is intervening sequence (IVS). Residues 665 to 800 (RRKTMWVQNL…TKLVTESTGA (136 aa)) form an S3-like 2nd part region.

This sequence belongs to the universal ribosomal protein uS3 family. In terms of assembly, part of the 30S ribosomal subunit.

It is found in the plastid. Its subcellular location is the chloroplast. The protein is Small ribosomal subunit protein uS3c (rps3) of Chlamydomonas moewusii (Chlamydomonas eugametos).